A 345-amino-acid polypeptide reads, in one-letter code: MADGLILRAIRGKAKTLNLNGKRLQRVPVAVGCLISLTELQLKNNLLCRLPVELSALCRLRVLHLGNNHFEKVPEEIKYLKCLERLHLFGNRISEIPAAALDGLDNLLFLNLNNNLLEHLPREIYKLQSLETLSINNNHMKAIPKELCFLQNLQELHLANNQLDSLPDELSYLTNLKELRLSRNQLTGLPEGICKLIKLKILDVAGNFIRSFPSAMHRVPLTELYCEENPLLEKQPVFARQQEEILTLKEITARLILNHLRSRNSFFIEQIQQHPEARSVLSSRNICALCGTWFLDMWLECVTFVDVKKKMKTSSNLQLLPVRVLLCSYRCFNQKQAGIFGVAVQ.

10 LRR repeats span residues 13 to 34 (KAKT…VGCL), 36 to 58 (SLTE…SALC), 59 to 80 (RLRV…IKYL), 82 to 103 (CLER…ALDG), 106 to 127 (NLLF…IYKL), 129 to 151 (SLET…CFLQ), 152 to 173 (NLQE…LSYL), 175 to 196 (NLKE…ICKL), 198 to 219 (KLKI…MHRV), and 220 to 241 (PLTE…FARQ).

This sequence belongs to the LRRC69 family.

This Xenopus laevis (African clawed frog) protein is Leucine-rich repeat-containing protein 69 (lrrc69).